Here is a 183-residue protein sequence, read N- to C-terminus: Large ribosomal subunit protein uL5 (183 aa).

The protein belongs to the universal ribosomal protein uL5 family. Part of the 50S ribosomal subunit; part of the 5S rRNA/L5/L18/L25 subcomplex. Contacts the 5S rRNA and the P site tRNA. Forms a bridge to the 30S subunit in the 70S ribosome.

Functionally, this is one of the proteins that bind and probably mediate the attachment of the 5S RNA into the large ribosomal subunit, where it forms part of the central protuberance. In the 70S ribosome it contacts protein S13 of the 30S subunit (bridge B1b), connecting the 2 subunits; this bridge is implicated in subunit movement. Contacts the P site tRNA; the 5S rRNA and some of its associated proteins might help stabilize positioning of ribosome-bound tRNAs. The chain is Large ribosomal subunit protein uL5 from Christiangramia forsetii (strain DSM 17595 / CGMCC 1.15422 / KT0803) (Gramella forsetii).